The chain runs to 175 residues: Large ribosomal subunit protein uL10 (175 aa).

Belongs to the universal ribosomal protein uL10 family. As to quaternary structure, part of the ribosomal stalk of the 50S ribosomal subunit. The N-terminus interacts with L11 and the large rRNA to form the base of the stalk. The C-terminus forms an elongated spine to which L12 dimers bind in a sequential fashion forming a multimeric L10(L12)X complex.

Its function is as follows. Forms part of the ribosomal stalk, playing a central role in the interaction of the ribosome with GTP-bound translation factors. The protein is Large ribosomal subunit protein uL10 of Psychrobacter arcticus (strain DSM 17307 / VKM B-2377 / 273-4).